A 369-amino-acid polypeptide reads, in one-letter code: uncharacterized protein (369 aa).

This is an uncharacterized protein from Haloarcula marismortui (strain ATCC 43049 / DSM 3752 / JCM 8966 / VKM B-1809) (Halobacterium marismortui).